A 238-amino-acid chain; its full sequence is Probable transcriptional regulatory protein CF0838 (238 aa).

Belongs to the TACO1 family.

It localises to the cytoplasm. This chain is Probable transcriptional regulatory protein CF0838, found in Chlamydia felis (strain Fe/C-56) (Chlamydophila felis).